The chain runs to 355 residues: MTELKNDRYLRALLKQPVDYTPVWMMRQAGRYLPEYKATRAEAGDFMSLCKNAELASEVTLQPLRRFPLDAAILFSDILTIPDAMGLGLYFETGEGPKFERPITCKADVDKIGLPDPEGELQYVMNAVRQIRKDLKGEVPLIGFSGSPWTLATYMVEGGSSKAFTKIKKMMYAEPATLHLLLDKLADSVIEYLNAQIKAGAQSVMVFDTWGGVLTPRDYNEFSLRYMHKIVDGLIRENEGRRVPVTLFTKNGGMWLESIAATGCDAVGLDWTINIADAKARIGDKVALQGNMDPSILYAQPERIRQEVGTILEGFGDAGTGHVFNLGHGIHLDVPPENAGVFVDAVHDLSKPYHK.

Residues 27-31, D77, Y154, T209, and H328 contribute to the substrate site; that span reads RQAGR.

Belongs to the uroporphyrinogen decarboxylase family. Homodimer.

Its subcellular location is the cytoplasm. It catalyses the reaction uroporphyrinogen III + 4 H(+) = coproporphyrinogen III + 4 CO2. It functions in the pathway porphyrin-containing compound metabolism; protoporphyrin-IX biosynthesis; coproporphyrinogen-III from 5-aminolevulinate: step 4/4. Functionally, catalyzes the decarboxylation of four acetate groups of uroporphyrinogen-III to yield coproporphyrinogen-III. The protein is Uroporphyrinogen decarboxylase of Aliivibrio fischeri (strain ATCC 700601 / ES114) (Vibrio fischeri).